The sequence spans 348 residues: RNA 3'-terminal phosphate cyclase (348 aa).

Residues Gln107 and 290–294 contribute to the ATP site; that span reads HLADQ. The active-site Tele-AMP-histidine intermediate is the His316.

The protein belongs to the RNA 3'-terminal cyclase family. Type 1 subfamily.

It localises to the cytoplasm. It carries out the reaction a 3'-end 3'-phospho-ribonucleotide-RNA + ATP = a 3'-end 2',3'-cyclophospho-ribonucleotide-RNA + AMP + diphosphate. Functionally, catalyzes the conversion of 3'-phosphate to a 2',3'-cyclic phosphodiester at the end of RNA. The mechanism of action of the enzyme occurs in 3 steps: (A) adenylation of the enzyme by ATP; (B) transfer of adenylate to an RNA-N3'P to produce RNA-N3'PP5'A; (C) and attack of the adjacent 2'-hydroxyl on the 3'-phosphorus in the diester linkage to produce the cyclic end product. The biological role of this enzyme is unknown but it is likely to function in some aspects of cellular RNA processing. This Nostoc punctiforme (strain ATCC 29133 / PCC 73102) protein is RNA 3'-terminal phosphate cyclase.